Reading from the N-terminus, the 138-residue chain is BPTI/Kunitz domain-containing protein 1 (138 aa).

The N-terminal stretch at 1–19 (MYTLYILSLLCAFVTFSEC) is a signal peptide. One can recognise a BPTI/Kunitz inhibitor domain in the interval 72–122 (CTLPRKIGPCRASIPRYYFNFVTKRCELFFWGGCQPNKNNFETIYDCQGYC). 3 cysteine pairs are disulfide-bonded: Cys72/Cys122, Cys81/Cys105, and Cys97/Cys118.

In terms of tissue distribution, prismatic layer of shell (at protein level). Expressed primarily in the mantle with highest level in the mantle edge and lower level in the mantle pallium.

It is found in the secreted. The protein is BPTI/Kunitz domain-containing protein 1 of Pinctada maxima (Silver-lipped pearl oyster).